Consider the following 306-residue polypeptide: Polyadenylate-binding protein 2 (306 aa).

Over residues 1–12 (MAAAAAAAAAAG) the composition is skewed to low complexity. The interval 1 to 115 (MAAAAAAAAA…EGDPGDGAIE (115 aa)) is disordered. N-acetylalanine is present on alanine 2. Residues 2–145 (AAAAAAAAAA…LKELQNEVEK (144 aa)) form an interaction with SKIP region. Arginine 17 is subject to Omega-N-methylarginine. A Phosphoserine modification is found at serine 19. Over residues 30 to 47 (GAGGEAGEGAPGGAGDYG) the composition is skewed to gly residues. A compositionally biased stretch (acidic residues) spans 51–72 (ESEELEPEELLLEPEPEPEPEE). Serine 52 carries the phosphoserine modification. Pro residues predominate over residues 77–87 (PRAPPGAPGPG). Positions 115-151 (EDPELEAIKARVREMEEEAEKLKELQNEVEKQMNMSP) form a coiled coil. The stimulates PAPOLA stretch occupies residues 119–147 (LEAIKARVREMEEEAEKLKELQNEVEKQM). Serine 150 and serine 235 each carry phosphoserine. A necessary for homooligomerization region spans residues 155 to 306 (NAGPVIMSIE…ARATSWYSPY (152 aa)). The region spanning 172-249 (RSIYVGNVDY…RQIKVIPKRT (78 aa)) is the RRM domain. An asymmetric dimethylarginine; alternate mark is found at arginine 238, arginine 259, and arginine 263. Omega-N-methylarginine; alternate is present on residues arginine 238, arginine 259, and arginine 263. Asymmetric dimethylarginine is present on residues arginine 265, arginine 267, arginine 269, arginine 277, arginine 279, arginine 287, arginine 289, arginine 291, arginine 294, arginine 296, and arginine 298. The segment at 286-306 (SRPRGRVYRGRARATSWYSPY) is interaction with PAPOLA.

Monomer and homooligomer. Binds RNA as a monomer and oligomerizes when bound to poly(A). Associates in a ternary complex with CPSF4 and NS/NS1 and interaction with NS/NS1, blocks nuclear export of host cell mRNAs. Associates in a single complex with SKIP and MYOD1 and interacts with SKIP in differentiated myocytes. Interacts with NUDT21/CPSF5. Identified in a IGF2BP1-dependent mRNP granule complex containing untranslated mRNAs. Interacts with PAPOLA, but only in presence of oligo(A) RNA. Interacts with transportin. May interact with SETX. Interacts (via RRM domain and C-terminal arginine-rich region) with ZFP36 (via hypophosphorylated form); this interaction occurs in the nucleus in a RNA-independent manner, decreases in presence of single-stranded poly(A) RNA-oligomer and in a p38-dependent-manner and may down-regulated RNA poly(A) polymerase activity. Component of the poly(A) tail exosome targeting (PAXT) complex composed of PABPN1, ZFC3H1 and MTREX. Interacts with ZFC3H1 in a RNase-insensitive manner. Interacts with FRG1. Interacts with ZC3H11A. In terms of processing, arginine dimethylation is asymmetric and involves PRMT1 and PRMT3. It does not influence the RNA binding properties. Ubiquitous.

The protein resides in the nucleus. The protein localises to the cytoplasm. It is found in the nucleus speckle. In terms of biological role, involved in the 3'-end formation of mRNA precursors (pre-mRNA) by the addition of a poly(A) tail of 200-250 nt to the upstream cleavage product. Stimulates poly(A) polymerase (PAPOLA) conferring processivity on the poly(A) tail elongation reaction and also controls the poly(A) tail length. Increases the affinity of poly(A) polymerase for RNA. Is also present at various stages of mRNA metabolism including nucleocytoplasmic trafficking and nonsense-mediated decay (NMD) of mRNA. Cooperates with SKIP to synergistically activate E-box-mediated transcription through MYOD1 and may regulate the expression of muscle-specific genes. Binds to poly(A) and to poly(G) with high affinity. May protect the poly(A) tail from degradation. Subunit of the trimeric poly(A) tail exosome targeting (PAXT) complex, a complex that directs a subset of long and polyadenylated poly(A) RNAs for exosomal degradation. The RNA exosome is fundamental for the degradation of RNA in eukaryotic nuclei. Substrate targeting is facilitated by its cofactor MTREX, which links to RNA-binding protein adapters. The polypeptide is Polyadenylate-binding protein 2 (PABPN1) (Bos taurus (Bovine)).